Reading from the N-terminus, the 441-residue chain is 3-phosphoshikimate 1-carboxyvinyltransferase (441 aa).

The interval 1–21 is disordered; that stretch reads MSANGPSHPARELKAGGSLSG. 3-phosphoshikimate contacts are provided by K29, S30, and R34. K29 serves as a coordination point for phosphoenolpyruvate. Phosphoenolpyruvate is bound by residues G103 and R132. S177, Q179, D328, and K355 together coordinate 3-phosphoshikimate. Q179 is a binding site for phosphoenolpyruvate. Catalysis depends on D328, which acts as the Proton acceptor. R359 and R401 together coordinate phosphoenolpyruvate.

This sequence belongs to the EPSP synthase family. Monomer.

The protein resides in the cytoplasm. It catalyses the reaction 3-phosphoshikimate + phosphoenolpyruvate = 5-O-(1-carboxyvinyl)-3-phosphoshikimate + phosphate. It functions in the pathway metabolic intermediate biosynthesis; chorismate biosynthesis; chorismate from D-erythrose 4-phosphate and phosphoenolpyruvate: step 6/7. In terms of biological role, catalyzes the transfer of the enolpyruvyl moiety of phosphoenolpyruvate (PEP) to the 5-hydroxyl of shikimate-3-phosphate (S3P) to produce enolpyruvyl shikimate-3-phosphate and inorganic phosphate. This is 3-phosphoshikimate 1-carboxyvinyltransferase from Parasynechococcus marenigrum (strain WH8102).